The chain runs to 408 residues: Serine/threonine transporter SstT (408 aa).

The next 9 membrane-spanning stretches (helical) occupy residues 11–31, 43–63, 82–102, 141–161, 192–212, 216–236, 290–310, 316–336, and 363–383; these read LANG…VSLA, FLGS…VFIL, IVVL…VLSM, ALMT…GLAL, IGIF…AIAG, LLAV…PLIV, IPLG…VLTL, LGIQ…AISA, and VAMQ…AAET.

It belongs to the dicarboxylate/amino acid:cation symporter (DAACS) (TC 2.A.23) family.

The protein resides in the cell inner membrane. The enzyme catalyses L-serine(in) + Na(+)(in) = L-serine(out) + Na(+)(out). It carries out the reaction L-threonine(in) + Na(+)(in) = L-threonine(out) + Na(+)(out). Its function is as follows. Involved in the import of serine and threonine into the cell, with the concomitant import of sodium (symport system). The chain is Serine/threonine transporter SstT from Shewanella sp. (strain ANA-3).